The following is a 288-amino-acid chain: Protease HtpX (288 aa).

The next 2 helical transmembrane spans lie at isoleucine 5 to leucine 25 and glycine 35 to serine 55. Histidine 140 lines the Zn(2+) pocket. Glutamate 141 is an active-site residue. Position 144 (histidine 144) interacts with Zn(2+). The next 2 membrane-spanning stretches (helical) occupy residues leucine 155–isoleucine 175 and isoleucine 194–phenylalanine 214. Glutamate 219 is a binding site for Zn(2+).

The protein belongs to the peptidase M48B family. The cofactor is Zn(2+).

The protein resides in the cell inner membrane. The protein is Protease HtpX of Stenotrophomonas maltophilia (strain K279a).